An 845-amino-acid polypeptide reads, in one-letter code: P protein (845 aa).

A disordered region spans residues 1-57 (MRLENREGRPTSGVLEMELPQASAPSRAGLGSLGLVGLDSSNHRPQQGGSKAGSRGP). Residues 1-183 (MRLENREGRP…HLSKLRCCVQ (183 aa)) are Extracellular-facing. Positions 26 to 40 (SRAGLGSLGLVGLDS) are enriched in low complexity. The chain crosses the membrane as a helical span at residues 184–204 (WLKVSGLFVFVVLCSILFSLY). At 205–337 (PDQGKFWQLL…QYLRASIEAQ (133 aa)) the chain is on the cytoplasmic side. A helical transmembrane segment spans residues 338 to 358 (VTIAAVILAGVYVLIIFEIVH). At 359 to 360 (RT) the chain is on the extracellular side. A helical transmembrane segment spans residues 361–381 (LAAMLGSLAALAALAVIGDRP). The Cytoplasmic segment spans residues 382 to 393 (TLTQVVEWIDFE). Residues 394–414 (TLALLFGMMILVAIFSETGFF) form a helical membrane-spanning segment. At 415 to 429 (DYCAVKAYQLSRGRV) the chain is on the extracellular side. A helical transmembrane segment spans residues 430–450 (WAMIIMLCLIAAVLSAFLDNV). At 451–513 (TTALLFTPVT…ELRKMGLDFA (63 aa)) the chain is on the cytoplasmic side. The helical transmembrane segment at 514-534 (GFTAHMFAGICFVLLFSFPLL) threads the bilayer. The Extracellular portion of the chain corresponds to 535–629 (RLLYWNRKLY…KKHRISDRTL (95 aa)). The chain crosses the membrane as a helical span at residues 630–650 (LTKCVTVLGLVIFMFFLNSFV). Pro651 is a topological domain (cytoplasmic). Residues 652–672 (GVHLDLGWIAILGAIWLLILA) form a helical membrane-spanning segment. The Extracellular segment spans residues 673–687 (DIHDFEIILHRVEWA). Residues 688-708 (TLLFFAALFILMEALAHLHLI) form a helical membrane-spanning segment. Residues 709–730 (EYVGEQTALLIKMVPEDQRLAA) lie on the Cytoplasmic side of the membrane. The helical transmembrane segment at 731-751 (AIIVVVWVSAIASSLIDNIPF) threads the bilayer. Residues 752-773 (TATMIPVLLNLSRDPEISLPAP) are Extracellular-facing. The chain crosses the membrane as a helical span at residues 774-794 (PLMYALALGACLGGNGTLIGA). The Cytoplasmic segment spans residues 795-820 (SANVVCAGIAEQHGYGFSFMEFFRLG). A helical membrane pass occupies residues 821 to 841 (FPMMVVSCMVGMCYLLVAHVV). Over 842 to 845 (MGWN) the chain is Extracellular.

This sequence belongs to the CitM (TC 2.A.11) transporter family.

Its subcellular location is the melanosome membrane. The catalysed reaction is chloride(in) = chloride(out). Functionally, contributes to a melanosome-specific anion (chloride) current that modulates melanosomal pH for optimal tyrosinase activity required for melanogenesis and the melanosome maturation. One of the components of the mammalian pigmentary system. May serve as a key control point at which ethnic skin color variation is determined. Major determinant of brown and/or blue eye color. Seems to regulate the post-translational processing of tyrosinase, which catalyzes the limiting reaction in melanin synthesis. This is P protein (Oca2) from Sus scrofa (Pig).